Reading from the N-terminus, the 605-residue chain is Glutamine--fructose-6-phosphate aminotransferase [isomerizing] (605 aa).

Catalysis depends on Cys-2, which acts as the Nucleophile; for GATase activity. The 215-residue stretch at 2–216 (CGIVGIVGHQ…DGDWAVIGKT (215 aa)) folds into the Glutamine amidotransferase type-2 domain. 2 SIS domains span residues 280-420 (DSDA…ARGT) and 454-595 (LSRE…VDQP). The active-site For Fru-6P isomerization activity is the Lys-600.

Its subcellular location is the cytoplasm. It carries out the reaction D-fructose 6-phosphate + L-glutamine = D-glucosamine 6-phosphate + L-glutamate. In terms of biological role, involved in the production of the root hair deformation (HAD) factor specifically on medicago. This chain is Glutamine--fructose-6-phosphate aminotransferase [isomerizing] (nodM), found in Rhizobium meliloti (Ensifer meliloti).